The primary structure comprises 1054 residues: Probable sucrose-phosphate synthase 1 (1054 aa).

The span at 104 to 115 (RLERERGRREAV) shows a compositional bias: basic and acidic residues. Disordered regions lie at residues 104 to 125 (RLER…LSEG), 674 to 693 (LRNE…SDSL), and 708 to 727 (DGDK…DDRA).

The protein belongs to the glycosyltransferase 1 family. In terms of assembly, homodimer or homotetramer.

The catalysed reaction is beta-D-fructose 6-phosphate + UDP-alpha-D-glucose = sucrose 6(F)-phosphate + UDP + H(+). Its pathway is glycan biosynthesis; sucrose biosynthesis; sucrose from D-fructose 6-phosphate and UDP-alpha-D-glucose: step 1/2. Its activity is regulated as follows. Activity is regulated by phosphorylation and moderated by concentration of metabolites and light. Plays a role in photosynthetic sucrose synthesis by catalyzing the rate-limiting step of sucrose biosynthesis from UDP-glucose and fructose- 6-phosphate. Involved in the regulation of carbon partitioning in the leaves of plants. May regulate the synthesis of sucrose and therefore play a major role as a limiting factor in the export of photoassimilates out of the leaf. Plays a role for sucrose availability that is essential for plant growth and fiber elongation. The protein is Probable sucrose-phosphate synthase 1 (SPS1) of Craterostigma plantagineum (Blue gem).